A 1940-amino-acid chain; its full sequence is Cilia- and flagella-associated protein 74 (1940 aa).

Positions 52-90 are disordered; that stretch reads GSPAVTLRRAKAAAAANGTSSPGIRGSPSPARGPGGRLP. Over residues 63-90 the composition is skewed to low complexity; that stretch reads AAAAANGTSSPGIRGSPSPARGPGGRLP. Positions 100 to 159 form a coiled coil; the sequence is ANVEQLKRRLQTVVAEVEGHQQRYDKVLLEANKATDLVHSMEAEIESLYVEAEELARRVP. Disordered stretches follow at residues 512–548, 1159–1336, 1373–1418, 1714–1737, and 1894–1940; these read VAGL…QSLT, SPHV…AAAE, PQSQ…AAPP, AGDK…GASK, and PGSR…KKAV. Low complexity predominate over residues 535–548; that stretch reads SLTQQLAATQQSLT. The segment covering 1205–1220 has biased composition (gly residues); it reads DGGGGGAMANGNGSGG. Residues 1227 to 1236 show a composition bias toward acidic residues; sequence DGEPEDGEGD. Residues 1260 to 1271 show a composition bias toward gly residues; sequence GRGGRGGRGGAA. Residues 1272-1282 are compositionally biased toward acidic residues; sequence GEDEDEDEDAG. A compositionally biased stretch (low complexity) spans 1287-1304; the sequence is RGKSSSSSKASSGRRSSS. Residues 1321–1335 show a composition bias toward acidic residues; sequence VPDDDDADAEAEAAA. The span at 1373–1414 shows a compositional bias: low complexity; it reads PQSQNPTPSQSQSGQAPAASAPSDGASGAAAAAETAASSGPA. Composition is skewed to pro residues over residues 1720–1731 and 1896–1912; these read TPAPGIKPPATP and SRPP…PAPE. The segment covering 1913–1929 has biased composition (low complexity); sequence PVAASGPGAGAAGVKKL. Positions 1930 to 1940 are enriched in pro residues; the sequence is VPPPSPPKKAV.

This sequence belongs to the CFAP74 family. As to quaternary structure, part of the PDCP1 complex composed of CFAP46, CFAP54, CFAP74 and CFAP221; the PDCP1 complex binds calmodulin.

The protein localises to the cytoplasm. The protein resides in the cytoskeleton. It is found in the cilium axoneme. In terms of biological role, as part of the central apparatus of the cilium axoneme may play a role in cilium movement and thereby cell motility. The chain is Cilia- and flagella-associated protein 74 from Chlamydomonas reinhardtii (Chlamydomonas smithii).